The following is a 300-amino-acid chain: MTDTPDPAAVLSPAVKAAVLSEALPYIRRFHGKTIVVKYGGNAMTEERLQRSFAHDVVLLKLVGLNPVVVHGGGPQIDDALRRIGKQGTFVQGMRVTDAETMEVVEWVLGGQVQQDIVMMINEVGGKAVGLTGKDGMLIQATKKLMVNKDDPSQPLDIGFVGDITRVEPAVVKALQDDQFIPVISPIGYGEDGTAYNINADVVAGKMAEVLGAEKLLMMTNTPGVLDKGGKLLRSLSAQTIDELFADGTISGGMLPKISSSLDAAKNGVNSVHIVDGRVPHCLLLEILTDQGVGTMISSH.

Residues 73–74, R95, and N197 each bind substrate; that span reads GG.

It belongs to the acetylglutamate kinase family. ArgB subfamily.

It is found in the cytoplasm. It catalyses the reaction N-acetyl-L-glutamate + ATP = N-acetyl-L-glutamyl 5-phosphate + ADP. The protein operates within amino-acid biosynthesis; L-arginine biosynthesis; N(2)-acetyl-L-ornithine from L-glutamate: step 2/4. In terms of biological role, catalyzes the ATP-dependent phosphorylation of N-acetyl-L-glutamate. In Bordetella bronchiseptica (strain ATCC BAA-588 / NCTC 13252 / RB50) (Alcaligenes bronchisepticus), this protein is Acetylglutamate kinase.